The following is a 277-amino-acid chain: RNA-binding protein pno-1 (277 aa).

Disordered regions lie at residues 1-52 (MATS…KLVK) and 72-100 (DEDA…GESR). The span at 8 to 27 (FDDELPMEEGMPELLDDEDV) shows a compositional bias: acidic residues. Positions 30 to 40 (TLPSLLEQNLD) are enriched in polar residues. Residues 72 to 81 (DEDATADTAD) are compositionally biased toward acidic residues. Residues 198–250 (GDHVSRAIGRIAGKDGRTKLVIENTTKTRIVVANTKIHILGAYQNLKLARNAV) form the KH domain.

The protein belongs to the PNO1 family. In terms of assembly, part of the small subunit (SSU) processome, composed of more than 70 proteins and the RNA chaperone small nucleolar RNA (snoRNA) U3.

The protein localises to the nucleus. Its subcellular location is the nucleolus. Functionally, part of the small subunit (SSU) processome, first precursor of the small eukaryotic ribosomal subunit. During the assembly of the SSU processome in the nucleolus, many ribosome biogenesis factors, an RNA chaperone and ribosomal proteins associate with the nascent pre-rRNA and work in concert to generate RNA folding, modifications, rearrangements and cleavage as well as targeted degradation of pre-ribosomal RNA by the RNA exosome. Positively regulates dimethylation of two adjacent adenosines in the loop of a conserved hairpin near the 3'-end of 18S rRNA. This Caenorhabditis elegans protein is RNA-binding protein pno-1.